Reading from the N-terminus, the 1614-residue chain is Low-density lipoprotein receptor-related protein 5 (1614 aa).

A signal peptide spans 1–30 (METAPTRAPPPPPPPLLLLVLYCSLVPAAA). Residues 31 to 287 (SPLLLFANRR…YSPMDIQVLS (257 aa)) form a beta-propeller 1 region. At 31–1383 (SPLLLFANRR…PPSDDIPAHS (1353 aa)) the chain is on the extracellular side. LDL-receptor class B repeat units follow at residues 74–118 (GAVY…DWVG), 119–161 (KKLY…DPAH), 162–205 (GYMY…DLEE), 206–246 (QKLY…TLSG), and 247–289 (DTLY…LSQE). 2 N-linked (GlcNAc...) asparagine glycosylation sites follow: Asn92 and Asn137. The region spanning 294–336 (FHTPCEEDNGGCSHLCLLSPREPFYSCACPTGVQLQDNGKTCK) is the EGF-like 1 domain. Disulfide bonds link Cys298/Cys309, Cys305/Cys320, and Cys322/Cys335. Residues 340–601 (EEVLLLARRT…AVNVAKVVGT (262 aa)) form a beta-propeller 2 region. 5 LDL-receptor class B repeats span residues 384-426 (GYVY…DWVA), 427-469 (RNLY…HPVM), 470-513 (GLMY…DLQE), 514-556 (GKLY…LGDF), and 557-599 (IYWT…AKVV). Residues Asn445 and Asn498 are each glycosylated (N-linked (GlcNAc...) asparagine). The EGF-like 2 domain occupies 600-640 (GTNPCADGNGGCSHLCFFTPRATKCGCPIGLELLSDMKTCI). Cystine bridges form between Cys604–Cys615, Cys611–Cys624, and Cys626–Cys639. The interval 643–902 (EAFLVFTSRA…VFHSSRQDGL (260 aa)) is beta-propeller 3. LDL-receptor class B repeat units follow at residues 686–728 (NHIY…DWMG), 729–771 (KNLY…DPTK), 772–814 (GYIY…DYAD), 815–854 (QRLYWTDLDTNMIESSNMLGQERMVIADDLPYPFGLTQYS), and 855–897 (DYIY…FHSS). An N-linked (GlcNAc...) asparagine glycan is attached at Asn704. N-linked (GlcNAc...) asparagine glycosylation occurs at Asn877. Residues 901–941 (GLNDCVHSNGQCGQLCLAIPGGHRCGCASHYTLDPSSRNCS) form the EGF-like 3 domain. 3 disulfides stabilise this stretch: Cys905–Cys916, Cys912–Cys925, and Cys927–Cys940. The tract at residues 944 to 1211 (STFLLFSQKF…AVEEVSLEEF (268 aa)) is beta-propeller 4. LDL-receptor class B repeat units follow at residues 988 to 1034 (KFIY…DIYS), 1035 to 1077 (RTLF…NAER), 1078 to 1122 (GYMY…DNAL), 1123 to 1164 (GKLF…VLGR), and 1165 to 1206 (HLYW…VEEV). The segment at 1002-1025 (AKDDGTQPSMLTSPSQSLSPDRQP) is disordered. A compositionally biased stretch (polar residues) spans 1007–1021 (TQPSMLTSPSQSLSP). An EGF-like 4 domain is found at 1212 to 1253 (SAHPCARDNGGCSHICIAKGDGTPRCSCPVHLVLLQNLLTCG). Disulfide bonds link Cys1216–Cys1227, Cys1223–Cys1237, Cys1239–Cys1252, Cys1258–Cys1272, Cys1265–Cys1285, Cys1279–Cys1294, Cys1297–Cys1309, Cys1304–Cys1322, Cys1316–Cys1331, Cys1335–Cys1347, Cys1342–Cys1360, and Cys1354–Cys1369. 3 LDL-receptor class A domains span residues 1257–1295 (TCSPDQFACTTGEIDCIPGAWRCDGFPECADQSDEEGCP), 1296–1332 (VCSASQFPCARGQCVDLRLRCDGEADCQDRSDEANCD), and 1334–1370 (VCLPNQFRCTSGQCVLIKQQCDSFPDCADGSDELMCE). The chain crosses the membrane as a helical span at residues 1384–1406 (SAIGPVIGIILSLFVMGGVYFVC). Residues 1407–1614 (QRVMCQRYTG…PPPSPCTDSS (208 aa)) are Cytoplasmic-facing. Residues 1474–1498 (RNHVTGASSSSSSSTKATLYPPILN) are disordered. Residues 1499-1505 (PPPSPAT) carry the PPPSP motif A motif. Residues 1537–1544 (PPTTPCST) carry the PPPSP motif B motif. Residues 1567–1599 (SDSDPYPPPPTPHSQYLSAEDSCPPSPGTERSY) are disordered. Positions 1573 to 1580 (PPPPTPHS) match the PPPSP motif C motif. A PPPSP motif D motif is present at residues 1590-1595 (PPSPGT). Residues 1604–1611 (PPPPSPCT) carry the PPPSP motif E motif.

This sequence belongs to the LDLR family. Homodimer; disulfide-linked. Forms phosphorylated oligomer aggregates on Wnt-signaling. Component of a WNT-signaling complex that contains a WNT protein, a FZD protein and LRP5 or LRP6. Interacts with FZD8; the interaction is formed on WNT-binding and signaling. Interacts (via the phosphorylated PPPSP motif domains) with AXIN1; the interaction prevents inhibition of beta-catenin phosphorylation and signaling and is enhanced in the presence of GSK3B and WNT1 or WNT3A. Interacts (via beta-propeller regions 3 and 4) with DKK1; the interaction, enhanced by MESD and/or KREMEN, inhibits beta-catenin signaling by preventing GSK3-mediated phosphorylation of the PPPSP motifs and subsequent, AXIN1 binding. Interacts with CSNK1E. Interacts with SOST; the interaction antagonizes canonical Wnt signaling. Interacts with APCDD1. Interacts with MESD; the interaction prevents the formation of LRP5 aggregates, targets LRP5 to the plasma membrane and, when complexed with KREMEN2, increases DKK1 binding. Interacts with CAPRIN2. Post-translationally, phosphorylation of cytoplasmic PPPSP motifs regulates the signal transduction of the Wnt signaling pathway through acting as a docking site for AXIN1. In terms of tissue distribution, widely expressed, with the highest expression levels in liver, heart, and lung and the lowest levels in brain and spleen.

It is found in the membrane. Its subcellular location is the endoplasmic reticulum. Functionally, acts as a coreceptor with members of the frizzled family of seven-transmembrane spanning receptors to transduce signal by Wnt proteins. Activates the canonical Wnt signaling pathway that controls cell fate determination and self-renewal during embryonic development and adult tissue regeneration. In particular, may play an important role in the development of the posterior patterning of the epiblast during gastrulation. During bone development, regulates osteoblast proliferation and differentiation thus determining bone mass. Mechanistically, the formation of the signaling complex between Wnt ligand, frizzled receptor and LRP5 coreceptor promotes the recruitment of AXIN1 to LRP5, stabilizing beta-catenin/CTNNB1 and activating TCF/LEF-mediated transcriptional programs. Acts as a coreceptor for non-Wnt proteins, such as norrin/NDP. Binding of norrin/NDP to frizzled 4/FZD4-LRP5 receptor complex triggers beta-catenin/CTNNB1-dependent signaling known to be required for retinal vascular development. Plays a role in controlling postnatal vascular regression in retina via macrophage-induced endothelial cell apoptosis. This Mus musculus (Mouse) protein is Low-density lipoprotein receptor-related protein 5.